The following is an 842-amino-acid chain: Axin-1 (842 aa).

Residues 1-75 (MSVKGKGFPL…LDLGYEPEGS (75 aa)) form a disordered region. A compositionally biased stretch (polar residues) spans 34-46 (TTDQRPFSHTYYS). In terms of domain architecture, RGS spans 88–211 (SLHSLLDDQD…LKSDIYLEYT (124 aa)). Disordered regions lie at residues 218-242 (PKNYSDQSSGSGTGKGPSGYLPTLN), 277-297 (SHCAGSNRRLSDGREFRPGTW), 316-344 (TSANDSEQQSMSSDADTMSLTDSSVDGIP), 414-451 (KRVRAEEEGDDGDVSSGPSVISHKLPSGPPMHHFNSRY), 482-532 (KTPG…AKVD), 543-562 (YHHVHHHGGVKPKEQIDGES), 615-637 (KKADLGKSESASHEMPVVPEDSE), 656-675 (HKKSNHSSSSAKKQPPTELA), and 729-754 (RLEEEEKKAAKMPQKQRLKPQKKNVS). Residues 316 to 339 (TSANDSEQQSMSSDADTMSLTDSS) are compositionally biased toward polar residues. The interaction with GSK3B stretch occupies residues 348-433 (LRKHYRREMQ…DGDVSSGPSV (86 aa)). The segment at 434-508 (ISHKLPSGPP…RSPDGHLSKT (75 aa)) is interaction with beta-catenin. The segment covering 543-552 (YHHVHHHGGV) has biased composition (basic residues). A compositionally biased stretch (basic and acidic residues) spans 615-626 (KKADLGKSESAS). One can recognise a DIX domain in the interval 760-842 (CDNIVVAYYF…KIIGQVEKID (83 aa)).

In terms of assembly, homodimer. Interacts with hwa; leading to promote the tankyrase-mediated degradation of axin1. ADP-ribosylated by tankyrase tnks and tnks2. Poly-ADP-ribosylated protein is recognized by rnf146, followed by ubiquitination at 'Lys-48' and subsequent activation of the Wnt signaling pathway. Post-translationally, ubiquitinated by rnf146 when poly-ADP-ribosylated, leading to its degradation and subsequent activation of the Wnt signaling pathway.

The protein localises to the cytoplasm. The protein resides in the nucleus. Its subcellular location is the membrane. It localises to the cell membrane. Its function is as follows. Component of the beta-catenin destruction complex required for regulating ctnnb1 levels through phosphorylation and ubiquitination, and modulating Wnt-signaling. Controls dorsoventral patterning via two opposing effects; down-regulates ctnnb1 to inhibit the Wnt signaling pathway and ventralize embryos, but also dorsalizes embryos by activating a Wnt-independent JNK signaling pathway. This is Axin-1 (axin1) from Xenopus laevis (African clawed frog).